Consider the following 383-residue polypeptide: Putative [LysW]-aminoadipate semialdehyde/glutamate semialdehyde transaminase (383 aa).

Residues 97 to 98 (GT) and F124 contribute to the pyridoxal 5'-phosphate site. R127 serves as a coordination point for substrate. 209–212 (DEVQ) contributes to the pyridoxal 5'-phosphate binding site. Residue K238 is modified to N6-(pyridoxal phosphate)lysine. S266 contacts substrate. Residue T267 coordinates pyridoxal 5'-phosphate.

It belongs to the class-III pyridoxal-phosphate-dependent aminotransferase family. LysJ subfamily. Homodimer. Pyridoxal 5'-phosphate is required as a cofactor.

The protein resides in the cytoplasm. It catalyses the reaction [amino-group carrier protein]-C-terminal-gamma-(L-lysyl)-L-glutamate + 2-oxoglutarate = [amino-group carrier protein]-C-terminal-N-(1-carboxy-5-oxopentan-1-yl)-L-glutamine + L-glutamate. The catalysed reaction is [amino-group carrier protein]-C-terminal-gamma-(L-ornithyl)-L-glutamate + 2-oxoglutarate = [amino-group carrier protein]-C-terminal-gamma-(L-glutamyl-5-semialdehyde)-L-glutamate + L-glutamate. It participates in amino-acid biosynthesis; L-lysine biosynthesis via AAA pathway; L-lysine from L-alpha-aminoadipate (Thermus route): step 4/5. Its pathway is amino-acid biosynthesis; L-arginine biosynthesis. Functionally, involved in both the arginine and lysine biosynthetic pathways. This chain is Putative [LysW]-aminoadipate semialdehyde/glutamate semialdehyde transaminase, found in Pyrobaculum aerophilum (strain ATCC 51768 / DSM 7523 / JCM 9630 / CIP 104966 / NBRC 100827 / IM2).